Here is an 81-residue protein sequence, read N- to C-terminus: Putative membrane protein insertion efficiency factor (81 aa).

The disordered stretch occupies residues 61–81 (NDGGYDPVPPAPSSRTSSIAE).

This sequence belongs to the UPF0161 family.

It is found in the cell inner membrane. In terms of biological role, could be involved in insertion of integral membrane proteins into the membrane. The polypeptide is Putative membrane protein insertion efficiency factor (Pseudomonas putida (strain ATCC 47054 / DSM 6125 / CFBP 8728 / NCIMB 11950 / KT2440)).